The primary structure comprises 432 residues: Glutamate-1-semialdehyde 2,1-aminomutase (432 aa).

An N6-(pyridoxal phosphate)lysine modification is found at K265.

The protein belongs to the class-III pyridoxal-phosphate-dependent aminotransferase family. HemL subfamily. In terms of assembly, homodimer. It depends on pyridoxal 5'-phosphate as a cofactor.

It localises to the cytoplasm. The catalysed reaction is (S)-4-amino-5-oxopentanoate = 5-aminolevulinate. It functions in the pathway porphyrin-containing compound metabolism; protoporphyrin-IX biosynthesis; 5-aminolevulinate from L-glutamyl-tRNA(Glu): step 2/2. In Histophilus somni (strain 129Pt) (Haemophilus somnus), this protein is Glutamate-1-semialdehyde 2,1-aminomutase.